The chain runs to 292 residues: Elongation factor Ts (292 aa).

Residues 79–82 (TDFV) are involved in Mg(2+) ion dislocation from EF-Tu.

It belongs to the EF-Ts family.

The protein localises to the cytoplasm. In terms of biological role, associates with the EF-Tu.GDP complex and induces the exchange of GDP to GTP. It remains bound to the aminoacyl-tRNA.EF-Tu.GTP complex up to the GTP hydrolysis stage on the ribosome. The protein is Elongation factor Ts of Staphylococcus haemolyticus (strain JCSC1435).